The following is a 506-amino-acid chain: Protein NEN3 (506 aa).

Residues 15–176 (FFDLETAVPT…LDDVRMNLEV (162 aa)) enclose the Exonuclease domain. Residues Asp17 and Glu19 each contribute to the Mg(2+) site. His164 (proton donor/acceptor) is an active-site residue. Asp169 serves as a coordination point for Mg(2+). Disordered regions lie at residues 204–240 (KSPR…SSVD) and 289–313 (AEEA…KDES). Over residues 222–238 (SSTSSSSSPKTDPSSSS) the composition is skewed to low complexity. Residues 290–299 (EEAKTVRQQD) are compositionally biased toward basic and acidic residues.

Mg(2+) serves as cofactor.

Functionally, probable exonuclease that may be involved in enuclation of sieve elements. In Arabidopsis thaliana (Mouse-ear cress), this protein is Protein NEN3 (NEN3).